Consider the following 144-residue polypeptide: MKSYIAKAEQIERKWYVVDAAGKPLGRVASQVASVLRGKHKPIFTPHVDTGDFVIVINSEKVLLTGKKLDQKMLRHHSLYPGGLKETPYREALNKKPEFVFQEAVRRMLPKGVLGRKMLKKLKVYRGTEHNNEAQKPEVLELKY.

This sequence belongs to the universal ribosomal protein uL13 family. In terms of assembly, part of the 50S ribosomal subunit.

This protein is one of the early assembly proteins of the 50S ribosomal subunit, although it is not seen to bind rRNA by itself. It is important during the early stages of 50S assembly. This is Large ribosomal subunit protein uL13 from Clostridium kluyveri (strain NBRC 12016).